The sequence spans 206 residues: Macrophage immunometabolism regulator (206 aa).

Position 1 is an N-acetylmethionine (M1). Positions 1–41 (MEVDINGESRSTLTTLPFPGAEANSPGKAEAEKPRCSSTPC) are disordered. Residues S25, S140, and S167 each carry the phosphoserine modification.

The protein belongs to the UNC119-binding protein family. Interacts with UNC119 and UNC119B; interaction preferentially takes place when UNC119 and UNC119B are unliganded with myristoylated proteins.

The protein localises to the cytoplasm. It localises to the cell projection. Its subcellular location is the cilium. Functionally, regulates the macrophage function, by enhancing the resolution of inflammation and wound repair functions mediated by M2 macrophages. The regulation of macrophage function is, due at least in part, to its ability to inhibit glycolysis. May also play a role in trafficking of proteins via its interaction with UNC119 and UNC119B cargo adapters: may help the release of UNC119 and UNC119B cargo or the recycling of UNC119 and UNC119B. May play a role in ciliary membrane localization via its interaction with UNC119B and protein transport into photoreceptor cells. This Pongo abelii (Sumatran orangutan) protein is Macrophage immunometabolism regulator (MACIR).